The primary structure comprises 456 residues: tRNA-2-methylthio-N(6)-dimethylallyladenosine synthase (456 aa).

An MTTase N-terminal domain is found at Lys-6–Arg-123. 6 residues coordinate [4Fe-4S] cluster: Cys-15, Cys-52, Cys-86, Cys-160, Cys-164, and Cys-167. One can recognise a Radical SAM core domain in the interval Arg-146–Ser-380. The region spanning Glu-381 to Glu-444 is the TRAM domain.

This sequence belongs to the methylthiotransferase family. MiaB subfamily. As to quaternary structure, monomer. Requires [4Fe-4S] cluster as cofactor.

It is found in the cytoplasm. The enzyme catalyses N(6)-dimethylallyladenosine(37) in tRNA + (sulfur carrier)-SH + AH2 + 2 S-adenosyl-L-methionine = 2-methylsulfanyl-N(6)-dimethylallyladenosine(37) in tRNA + (sulfur carrier)-H + 5'-deoxyadenosine + L-methionine + A + S-adenosyl-L-homocysteine + 2 H(+). Functionally, catalyzes the methylthiolation of N6-(dimethylallyl)adenosine (i(6)A), leading to the formation of 2-methylthio-N6-(dimethylallyl)adenosine (ms(2)i(6)A) at position 37 in tRNAs that read codons beginning with uridine. In Dichelobacter nodosus (strain VCS1703A), this protein is tRNA-2-methylthio-N(6)-dimethylallyladenosine synthase.